The chain runs to 486 residues: Ribosomal protein uS12 methylthiotransferase RimO (486 aa).

In terms of domain architecture, MTTase N-terminal spans 9–125 (RSVALVTLGC…LSSHLEAILH (117 aa)). [4Fe-4S] cluster is bound by residues Cys18, Cys54, Cys88, Cys191, Cys195, and Cys198. Positions 177–408 (LGSGPWAPVK…RLVEELVTQR (232 aa)) constitute a Radical SAM core domain. A TRAM domain is found at 410–482 (EERLGEVVEV…GADLLAEPLV (73 aa)).

It belongs to the methylthiotransferase family. RimO subfamily. It depends on [4Fe-4S] cluster as a cofactor.

The protein resides in the cytoplasm. It carries out the reaction L-aspartate(89)-[ribosomal protein uS12]-hydrogen + (sulfur carrier)-SH + AH2 + 2 S-adenosyl-L-methionine = 3-methylsulfanyl-L-aspartate(89)-[ribosomal protein uS12]-hydrogen + (sulfur carrier)-H + 5'-deoxyadenosine + L-methionine + A + S-adenosyl-L-homocysteine + 2 H(+). In terms of biological role, catalyzes the methylthiolation of an aspartic acid residue of ribosomal protein uS12. The protein is Ribosomal protein uS12 methylthiotransferase RimO of Kineococcus radiotolerans (strain ATCC BAA-149 / DSM 14245 / SRS30216).